The chain runs to 362 residues: Chalcone synthase A (362 aa).

Residue cysteine 168 is part of the active site.

Belongs to the thiolase-like superfamily. Chalcone/stilbene synthases family.

It catalyses the reaction (E)-4-coumaroyl-CoA + 3 malonyl-CoA + 3 H(+) = 2',4,4',6'-tetrahydroxychalcone + 3 CO2 + 4 CoA. Its pathway is secondary metabolite biosynthesis; flavonoid biosynthesis. Its function is as follows. The primary product of this enzyme is 4,2',4',6'-tetrahydroxychalcone (also termed naringenin-chalcone or chalcone) which can under specific conditions spontaneously isomerize into naringenin. This is Chalcone synthase A (CHSA) from Ipomoea triloba (Trilobed morning glory).